We begin with the raw amino-acid sequence, 75 residues long: Xibalbin-13 2 (75 aa).

The signal sequence occupies residues 1–27 (MKEANTRRYIYLCLVVVLLSIIITTEA). A propeptide spanning residues 28–30 (EDD) is cleaved from the precursor. 4 cysteine pairs are disulfide-bonded: C34/C49, C41/C54, C48/C65, and C56/C63.

The protein belongs to the xibalbin-13 family. Expressed by the venom gland and the whole body.

It is found in the secreted. Its function is as follows. Probable neurotoxin. Strongly inhibits voltage-gated potassium channels (Kv1.1/KCNA1, Kv1.2/KCNA2, Kv1.3/KCNA3, and Kv1.6/KCNA6, with the highest toxicity against Kv1.1 (85.1% inhibition at 1 uM)) and mildly inhibits sodium channels (Nav1.2/SCN2A, Nav1.4/SCN4A, Nav1.5/SCN5A, Nav1.6/SCN8A, and BgNav). Induces activation of protein kinase A type II (PKA-II) and MAP kinase Erk1/2 in primary nociceptive and non-nociceptive sensory neurons. Does not show cytotoxic activity. Does not have an impact on Ca2+, cAMP, and NO signaling in the cell types analyzed. Does not interfere with the adhesion of leukocytes to endothelial cells. The sequence is that of Xibalbin-13 2 from Xibalbanus tulumensis (Blind cave remipede).